The sequence spans 389 residues: Galactokinase (389 aa).

A substrate-binding site is contributed by 34–37 (EHTD). Residues Ser-68 and 125-131 (GSGLSSS) contribute to the ATP site. The Mg(2+) site is built by Ser-131 and Glu-163. Asp-175 functions as the Proton acceptor in the catalytic mechanism. Tyr-225 contacts substrate.

The protein belongs to the GHMP kinase family. GalK subfamily.

The protein resides in the cytoplasm. The enzyme catalyses alpha-D-galactose + ATP = alpha-D-galactose 1-phosphate + ADP + H(+). Its pathway is carbohydrate metabolism; galactose metabolism. Catalyzes the transfer of the gamma-phosphate of ATP to D-galactose to form alpha-D-galactose-1-phosphate (Gal-1-P). In Clostridium beijerinckii (strain ATCC 51743 / NCIMB 8052) (Clostridium acetobutylicum), this protein is Galactokinase.